The following is a 357-amino-acid chain: DnaJ homolog subfamily C member 25 (357 aa).

The chain crosses the membrane as a helical span at residues 19–39; the sequence is WLLLAPLLLVPLLARPAEALV. The J domain occupies 48–121; it reads DCYEVLGVSR…ETRKDYDYML (74 aa). Helical transmembrane passes span 147-167 and 241-261; these read VVIL…WWNS and LLLF…AWYC.

The protein belongs to the DNAJC25 family.

Its subcellular location is the membrane. This is DnaJ homolog subfamily C member 25 (Dnajc25) from Mus musculus (Mouse).